The sequence spans 689 residues: Glycine--tRNA ligase beta subunit (689 aa).

Belongs to the class-II aminoacyl-tRNA synthetase family. In terms of assembly, tetramer of two alpha and two beta subunits.

The protein localises to the cytoplasm. The catalysed reaction is tRNA(Gly) + glycine + ATP = glycyl-tRNA(Gly) + AMP + diphosphate. The protein is Glycine--tRNA ligase beta subunit of Shigella flexneri serotype 5b (strain 8401).